A 171-amino-acid chain; its full sequence is Small ribosomal subunit protein uS4 (171 aa).

Residues 101–165 (RRLQTVVYRK…SSLSDELHPE (65 aa)) enclose the S4 RNA-binding domain. The interval 148–171 (SSVGFDEHSSLSDELHPERAEAQE) is disordered. Over residues 152–171 (FDEHSSLSDELHPERAEAQE) the composition is skewed to basic and acidic residues.

It belongs to the universal ribosomal protein uS4 family. In terms of assembly, part of the 30S ribosomal subunit. Contacts protein S5. The interaction surface between S4 and S5 is involved in control of translational fidelity.

Its function is as follows. One of the primary rRNA binding proteins, it binds directly to 16S rRNA where it nucleates assembly of the body of the 30S subunit. With S5 and S12 plays an important role in translational accuracy. This Haloarcula marismortui (strain ATCC 43049 / DSM 3752 / JCM 8966 / VKM B-1809) (Halobacterium marismortui) protein is Small ribosomal subunit protein uS4.